We begin with the raw amino-acid sequence, 398 residues long: Pheromone receptor transcription activator (398 aa).

Disordered regions lie at residues 1-30 (MMDE…YLED), 101-125 (TDQN…ESGY), and 254-317 (PSTG…DRPP). Residues 20–74 (GSSQGNSYLEDRQKRQNTFTKRKAGIFKKANELALLTGSEVMVLVVSETGLVHTF) form the MADS-box domain. The segment covering 106–121 (SQASQAKQSSAQLSDS) has biased composition (low complexity). 2 stretches are compositionally biased toward polar residues: residues 262–273 (TTGQHSVNSPPS) and 282–294 (NKSF…PQTP).

The protein localises to the nucleus. Its function is as follows. In response to mating-pheromone signaling or nitrogen starvation, it interacts with mat1-Pc. This activates the expression of one of two mating-type-specific genes sxa2 or map3, which leads to inactivation of the P-factor. May also interact with mat1-Mc. The protein is Pheromone receptor transcription activator (map1) of Schizosaccharomyces pombe (strain 972 / ATCC 24843) (Fission yeast).